A 352-amino-acid polypeptide reads, in one-letter code: tRNA-specific 2-thiouridylase MnmA (352 aa).

ATP contacts are provided by residues 6–13 (AMSGGVDS) and Leu-32. The Nucleophile role is filled by Cys-101. Cys-101 and Cys-194 are joined by a disulfide. Gly-125 contacts ATP. The tract at residues 144–146 (KDQ) is interaction with tRNA. Cys-194 functions as the Cysteine persulfide intermediate in the catalytic mechanism.

The protein belongs to the MnmA/TRMU family.

The protein localises to the cytoplasm. The enzyme catalyses S-sulfanyl-L-cysteinyl-[protein] + uridine(34) in tRNA + AH2 + ATP = 2-thiouridine(34) in tRNA + L-cysteinyl-[protein] + A + AMP + diphosphate + H(+). Its function is as follows. Catalyzes the 2-thiolation of uridine at the wobble position (U34) of tRNA, leading to the formation of s(2)U34. This Frankia alni (strain DSM 45986 / CECT 9034 / ACN14a) protein is tRNA-specific 2-thiouridylase MnmA.